A 455-amino-acid polypeptide reads, in one-letter code: Epoxide hydrolase 1 (455 aa).

Residues 1-21 traverse the membrane as a helical; Signal-anchor for type III membrane protein segment; the sequence is MLLELLLASVLGFVIYWFVSG. Residues 22–455 are Cytoplasmic-facing; that stretch reads DKEESLPLED…CKFVGLVERQ (434 aa). Aspartate 226 serves as the catalytic Nucleophile. Dimethylated arginine is present on arginine 295. The Proton donor role is filled by tyrosine 374. The Proton acceptor role is filled by histidine 431.

Belongs to the peptidase S33 family.

The protein localises to the microsome membrane. It is found in the endoplasmic reticulum membrane. It carries out the reaction cis-stilbene oxide + H2O = (1R,2R)-hydrobenzoin. It catalyses the reaction 1-(4-methoxyphenyl)-N-methyl-N-[(3-methyloxetan-3-yl)methyl]methanamine + H2O = 2-{[(4-methoxybenzyl)(methyl)amino]methyl}-2-methylpropane-1,3-diol. The enzyme catalyses 8,9-epoxy-(5Z,11Z,14Z)-eicosatrienoate + H2O = 8,9-dihydroxy-(5Z,11Z,14Z)-eicosatrienoate. The catalysed reaction is 11,12-epoxy-(5Z,8Z,14Z)-eicosatrienoate + H2O = 11,12-dihydroxy-(5Z,8Z,14Z)-eicosatrienoate. It carries out the reaction 2-(5Z,8Z,11Z,14Z-eicosatetraenoyl)-glycerol + H2O = glycerol + (5Z,8Z,11Z,14Z)-eicosatetraenoate + H(+). Inhibited by 10-hydroxystearamide and methoxy-arachidonyl fluorophosphate. Its function is as follows. Biotransformation enzyme that catalyzes the hydrolysis of arene and aliphatic epoxides to less reactive and more water soluble dihydrodiols by the trans addition of water. May play a role in the metabolism of endogenous lipids such as epoxide-containing fatty acids. Metabolizes the abundant endocannabinoid 2-arachidonoylglycerol (2-AG) to free arachidonic acid (AA) and glycerol. Binds 20(S)-hydroxycholesterol (20(S)-OHC). The chain is Epoxide hydrolase 1 (EPHX1) from Oryctolagus cuniculus (Rabbit).